Consider the following 488-residue polypeptide: Pup--protein ligase (488 aa).

Glu33 provides a ligand contact to Mg(2+). Arg76 contributes to the ATP binding site. Residue Tyr78 coordinates Mg(2+). The Proton acceptor role is filled by Asp80. Glu86 contacts Mg(2+). 2 residues coordinate ATP: Thr89 and Trp453.

This sequence belongs to the Pup ligase/Pup deamidase family. Pup-conjugating enzyme subfamily.

It carries out the reaction ATP + [prokaryotic ubiquitin-like protein]-L-glutamate + [protein]-L-lysine = ADP + phosphate + N(6)-([prokaryotic ubiquitin-like protein]-gamma-L-glutamyl)-[protein]-L-lysine.. The protein operates within protein degradation; proteasomal Pup-dependent pathway. It participates in protein modification; protein pupylation. In terms of biological role, catalyzes the covalent attachment of the prokaryotic ubiquitin-like protein modifier Pup to the proteasomal substrate proteins, thereby targeting them for proteasomal degradation. This tagging system is termed pupylation. The ligation reaction involves the side-chain carboxylate of the C-terminal glutamate of Pup and the side-chain amino group of a substrate lysine. The chain is Pup--protein ligase from Bifidobacterium adolescentis (strain ATCC 15703 / DSM 20083 / NCTC 11814 / E194a).